Consider the following 130-residue polypeptide: Small ribosomal subunit protein uS8 (130 aa).

The protein belongs to the universal ribosomal protein uS8 family.

The protein localises to the cytoplasm. This chain is Small ribosomal subunit protein uS8 (RPS15A), found in Daucus carota (Wild carrot).